The primary structure comprises 1074 residues: Chitin synthase 2 (1074 aa).

Disordered regions lie at residues 1 to 32, 56 to 179, and 209 to 255; these read MSHYHRQGGPGQPHDSYEDQQQPYYTDQAHSG, QAAP…PSQH, and RSDS…PYNN. Residues 19–29 are compositionally biased toward polar residues; that stretch reads DQQQPYYTDQA. The segment covering 68 to 80 has biased composition (low complexity); it reads RIRSNSSGSRSVS. Asn-72 and Asn-97 each carry an N-linked (GlcNAc...) asparagine glycan. Polar residues predominate over residues 85 to 119; it reads AYTNQGIPPVPSNLSAARQRSDPSQALPPSSSSYA. The span at 129-143 shows a compositional bias: low complexity; sequence SSHRNAPNAPNSNHP. N-linked (GlcNAc...) asparagine glycosylation is present at Asn-149. N-linked (GlcNAc...) asparagine glycosylation is present at Asn-289. 8 helical membrane passes run 608 to 628, 742 to 762, 779 to 799, 817 to 837, 867 to 887, 891 to 911, 1001 to 1021, and 1048 to 1068; these read VFGFISVLPGAFSAYRYKALL, LVLLVFSWFGIANFFLAFYFL, GAAIVEIFQNIFIAMVIVVLV, IIIFALIMGLALYAAGYTIYL, IVISLAATYVMWLLCSLLHLE, MLTSFVQYLFLTPTYVIILSM, LVLIWMCTNALVVIIFTSTWW, and IFWSTAGLSAVRFVGSITFLL.

It belongs to the chitin synthase family. Class II subfamily.

Its subcellular location is the cell membrane. It localises to the cytoplasmic vesicle membrane. It carries out the reaction [(1-&gt;4)-N-acetyl-beta-D-glucosaminyl](n) + UDP-N-acetyl-alpha-D-glucosamine = [(1-&gt;4)-N-acetyl-beta-D-glucosaminyl](n+1) + UDP + H(+). Its function is as follows. Polymerizes chitin, a structural polymer of the cell wall and septum, by transferring the sugar moiety of UDP-GlcNAc to the non-reducing end of the growing chitin polymer. The protein is Chitin synthase 2 (CHS2) of Mycosarcoma maydis (Corn smut fungus).